The chain runs to 186 residues: Ribosome-recycling factor (186 aa).

Belongs to the RRF family.

It is found in the cytoplasm. Functionally, responsible for the release of ribosomes from messenger RNA at the termination of protein biosynthesis. May increase the efficiency of translation by recycling ribosomes from one round of translation to another. The sequence is that of Ribosome-recycling factor from Chlorobium limicola (strain DSM 245 / NBRC 103803 / 6330).